Consider the following 523-residue polypeptide: Sorting nexin-2 (523 aa).

A disordered region spans residues 1 to 104 (MAAEREPPPL…EPSPAVTPVT (104 aa)). 2 stretches are compositionally biased toward low complexity: residues 27-50 (LFTSTVSTLESSPSSPEPASLPAE) and 93-104 (SSEPSPAVTPVT). S97 bears the Phosphoserine mark. Residues T101 and T104 each carry the phosphothreonine modification. Phosphoserine is present on residues S117 and S119. The 130-residue stretch at 140-269 (FDIEIGVSDP…QFLESSELPR (130 aa)) folds into the PX domain. R183, S185, K211, and R235 together coordinate a 1,2-diacyl-sn-glycero-3-phospho-(1D-myo-inositol-3-phosphate). Residue S185 is modified to Phosphoserine. Positions 260 to 523 (QFLESSELPR…AFLPEAKAIA (264 aa)) are interaction with RhoG. Phosphoserine is present on S277. Residues 278 to 295 (GAGILRMVNKAADAVNKM) form a membrane-binding amphipathic helix region. Residues 299–523 (MNESDAWFEE…AFLPEAKAIA (225 aa)) enclose the BAR domain. K473 carries the N6-acetyllysine modification.

Belongs to the sorting nexin family. As to quaternary structure, predominantly forms heterodimers with BAR domain-containing sorting nexins SNX5, SNX6 and SNX32; can self-associate to form homodimers. The heterodimers are proposed to self-assemble into helical arrays on the membrane to stabilize and expand local membrane curvature underlying endosomal tubule formation. Thought to be a component of the originally described retromer complex (also called SNX-BAR retromer) which is a pentamer containing the heterotrimeric retromer cargo-selective complex (CSC), also described as vacuolar protein sorting subcomplex (VPS), and a heterodimeric membrane-deforming subcomplex formed between SNX1 or SNX2 and SNX5 or SNX6 (also called SNX-BAR subcomplex); the respective CSC and SNX-BAR subcomplexes associate with low affinity. Interacts with SNX5, SNX6, SNX32, VPS26A, VPS29, VPS35, FNBP1, KALRN, RHOG (GDP-bound form).

The protein resides in the early endosome membrane. It is found in the cell projection. Its subcellular location is the lamellipodium. Its function is as follows. Involved in several stages of intracellular trafficking. Interacts with membranes containing phosphatidylinositol 3-phosphate (PtdIns(3P)) or phosphatidylinositol 3,5-bisphosphate (PtdIns(3,5)P2). Acts in part as component of the retromer membrane-deforming SNX-BAR subcomplex. The SNX-BAR retromer mediates retrograde transport of cargo proteins from endosomes to the trans-Golgi network (TGN) and is involved in endosome-to-plasma membrane transport for cargo protein recycling. The SNX-BAR subcomplex functions to deform the donor membrane into a tubular profile called endosome-to-TGN transport carrier (ETC). Can sense membrane curvature and has in vitro vesicle-to-membrane remodeling activity. Required for retrograde endosome-to-TGN transport of TGN38. Promotes KALRN- and RHOG-dependent but retromer-independent membrane remodeling such as lamellipodium formation; the function is dependent on GEF activity of KALRN. This chain is Sorting nexin-2 (SNX2), found in Macaca fascicularis (Crab-eating macaque).